The primary structure comprises 189 residues: Phosphoheptose isomerase (189 aa).

In terms of domain architecture, SIS spans 33 to 189 (CTDTLKAGNK…ELVEREIYGG (157 aa)). 48 to 50 (NGG) serves as a coordination point for substrate. Positions 57 and 61 each coordinate Zn(2+). Substrate contacts are provided by residues Glu-61, 90 to 91 (ND), 116 to 118 (STS), Ser-121, and Gln-168. 2 residues coordinate Zn(2+): Gln-168 and His-176.

This sequence belongs to the SIS family. GmhA subfamily. Zn(2+) is required as a cofactor.

Its subcellular location is the cytoplasm. It catalyses the reaction 2 D-sedoheptulose 7-phosphate = D-glycero-alpha-D-manno-heptose 7-phosphate + D-glycero-beta-D-manno-heptose 7-phosphate. The protein operates within carbohydrate biosynthesis; D-glycero-D-manno-heptose 7-phosphate biosynthesis; D-glycero-alpha-D-manno-heptose 7-phosphate and D-glycero-beta-D-manno-heptose 7-phosphate from sedoheptulose 7-phosphate: step 1/1. Its function is as follows. Catalyzes the isomerization of sedoheptulose 7-phosphate in D-glycero-D-manno-heptose 7-phosphate. This chain is Phosphoheptose isomerase, found in Akkermansia muciniphila (strain ATCC BAA-835 / DSM 22959 / JCM 33894 / BCRC 81048 / CCUG 64013 / CIP 107961 / Muc).